The chain runs to 190 residues: Protein GrpE (190 aa).

Belongs to the GrpE family. In terms of assembly, homodimer.

The protein resides in the cytoplasm. Its function is as follows. Participates actively in the response to hyperosmotic and heat shock by preventing the aggregation of stress-denatured proteins, in association with DnaK and GrpE. It is the nucleotide exchange factor for DnaK and may function as a thermosensor. Unfolded proteins bind initially to DnaJ; upon interaction with the DnaJ-bound protein, DnaK hydrolyzes its bound ATP, resulting in the formation of a stable complex. GrpE releases ADP from DnaK; ATP binding to DnaK triggers the release of the substrate protein, thus completing the reaction cycle. Several rounds of ATP-dependent interactions between DnaJ, DnaK and GrpE are required for fully efficient folding. This Streptococcus agalactiae serotype III (strain NEM316) protein is Protein GrpE.